Consider the following 394-residue polypeptide: Methionine import ATP-binding protein MetN 2 (394 aa).

The ABC transporter domain occupies 39–278; that stretch reads VSLEQVGKVF…PRHGATRALL (240 aa). 75-82 is a binding site for ATP; sequence GRSGAGKS.

Belongs to the ABC transporter superfamily. Methionine importer (TC 3.A.1.24) family. In terms of assembly, the complex is composed of two ATP-binding proteins (MetN), two transmembrane proteins (MetI) and a solute-binding protein (MetQ).

It is found in the cell inner membrane. It catalyses the reaction L-methionine(out) + ATP + H2O = L-methionine(in) + ADP + phosphate + H(+). The catalysed reaction is D-methionine(out) + ATP + H2O = D-methionine(in) + ADP + phosphate + H(+). Part of the ABC transporter complex MetNIQ involved in methionine import. Responsible for energy coupling to the transport system. This chain is Methionine import ATP-binding protein MetN 2, found in Burkholderia cenocepacia (strain HI2424).